The chain runs to 432 residues: Glutamyl-tRNA reductase (432 aa).

Residues 49–52 (TCNR), S101, 106–108 (ESQ), and Q112 each bind substrate. C50 serves as the catalytic Nucleophile. 181–186 (GAGETI) lines the NADP(+) pocket. Residues 410 to 432 (KPGYHHPTLQTTIVKTDETDPAS) are disordered.

The protein belongs to the glutamyl-tRNA reductase family. Homodimer.

The catalysed reaction is (S)-4-amino-5-oxopentanoate + tRNA(Glu) + NADP(+) = L-glutamyl-tRNA(Glu) + NADPH + H(+). The protein operates within porphyrin-containing compound metabolism; protoporphyrin-IX biosynthesis; 5-aminolevulinate from L-glutamyl-tRNA(Glu): step 1/2. Its function is as follows. Catalyzes the NADPH-dependent reduction of glutamyl-tRNA(Glu) to glutamate 1-semialdehyde (GSA). In Xylella fastidiosa (strain M23), this protein is Glutamyl-tRNA reductase.